Here is a 427-residue protein sequence, read N- to C-terminus: Enolase 2 (427 aa).

A (2R)-2-phosphoglycerate-binding site is contributed by glutamine 163. Catalysis depends on glutamate 205, which acts as the Proton donor. Mg(2+) contacts are provided by aspartate 242, glutamate 285, and aspartate 312. (2R)-2-phosphoglycerate is bound by residues lysine 337, arginine 366, serine 367, and lysine 388. Lysine 337 (proton acceptor) is an active-site residue.

This sequence belongs to the enolase family. In terms of assembly, component of the RNA degradosome, a multiprotein complex involved in RNA processing and mRNA degradation. It depends on Mg(2+) as a cofactor.

It is found in the cytoplasm. The protein localises to the secreted. The protein resides in the cell surface. It catalyses the reaction (2R)-2-phosphoglycerate = phosphoenolpyruvate + H2O. The protein operates within carbohydrate degradation; glycolysis; pyruvate from D-glyceraldehyde 3-phosphate: step 4/5. Functionally, catalyzes the reversible conversion of 2-phosphoglycerate (2-PG) into phosphoenolpyruvate (PEP). It is essential for the degradation of carbohydrates via glycolysis. The sequence is that of Enolase 2 from Methylococcus capsulatus (strain ATCC 33009 / NCIMB 11132 / Bath).